The sequence spans 124 residues: Astakine (124 aa).

The N-terminal stretch at 1 to 21 is a signal peptide; sequence MAVSSAVRMLSVACLVVSAAG. Disulfide bonds link Cys28-Cys40, Cys34-Cys52, Cys39-Cys91, Cys62-Cys99, and Cys93-Cys106.

Belongs to the AVIT (prokineticin) family.

Its subcellular location is the secreted. Its function is as follows. Cytokine directly involved in hematopoiesis. In Penaeus monodon (Giant tiger prawn), this protein is Astakine.